The sequence spans 284 residues: Averufin oxidase A (284 aa).

Positions 1–23 (MPTYALLGATGATGSAILRCLLA) are cleaved as a signal peptide. N-linked (GlcNAc...) asparagine glycans are attached at residues asparagine 62, asparagine 86, and asparagine 190.

The protein belongs to the avfA family.

It functions in the pathway mycotoxin biosynthesis. Functionally, averufin oxidase A; part of the fragmented gene cluster that mediates the biosynthesis of dothistromin (DOTH), a polyketide toxin very similar in structure to the aflatoxin precursor, versicolorin B. The first step of the pathway is the conversion of acetate to norsolorinic acid (NOR) and requires the fatty acid synthase subunits hexA and hexB, as well as the polyketide synthase pksA. PksA combines a hexanoyl starter unit and 7 malonyl-CoA extender units to synthesize the precursor NOR. The hexanoyl starter unit is provided to the acyl-carrier protein (ACP) domain by the fungal fatty acid synthase hexA/hexB. The second step is the conversion of NOR to averantin (AVN) and requires the norsolorinic acid ketoreductase nor1, which catalyzes the dehydration of norsolorinic acid to form (1'S)-averantin. The cytochrome P450 monooxygenase avnA then catalyzes the hydroxylation of AVN to 5'hydroxyaverantin (HAVN). The next step is performed by adhA that transforms HAVN to averufin (AVF). Averufin might then be converted to hydroxyversicolorone by cypX and avfA. Hydroxyversicolorone is further converted versiconal hemiacetal acetate (VHA) by moxY. VHA is then the substrate for the versiconal hemiacetal acetate esterase est1 to yield versiconal (VAL). Versicolorin B synthase vbsA then converts VAL to versicolorin B (VERB) by closing the bisfuran ring. Then, the activity of the versicolorin B desaturase verB leads to versicolorin A (VERA). DotB, a predicted chloroperoxidase, may perform epoxidation of the A-ring of VERA. Alternatively, a cytochrome P450, such as cypX or avnA could catalyze this step. It is also possible that another, uncharacterized, cytochrome P450 enzyme is responsible for this step. Opening of the epoxide could potentially be achieved by the epoxide hydrolase epoA. However, epoA seems not to be required for DOTH biosynthesis, but other epoxide hydrolases may have the ability to complement this hydrolysis. Alternatively, opening of the epoxide ring could be achieved non-enzymatically. The next step is the deoxygenation of ring A to yield the 5,8-dihydroxyanthraquinone which is most likely catalyzed by the NADPH dehydrogenase encoded by ver1. The last stages of DOTH biosynthesis are proposed to involve hydroxylation of the bisfuran. OrdB and norB might have oxidative roles here. An alternative possibility is that cytochrome P450 monoogenases such as avnA and cypX might perform these steps in addition to previously proposed steps. The sequence is that of Averufin oxidase A from Dothistroma septosporum (strain NZE10 / CBS 128990) (Red band needle blight fungus).